The chain runs to 60 residues: uncharacterized protein (60 aa).

This is an uncharacterized protein from Saccharomyces cerevisiae (strain ATCC 204508 / S288c) (Baker's yeast).